The following is a 358-amino-acid chain: Type II restriction enzyme HpaII (358 aa).

As to quaternary structure, homodimer.

The catalysed reaction is Endonucleolytic cleavage of DNA to give specific double-stranded fragments with terminal 5'-phosphates.. An E and P subtype restriction enzyme that recognizes the double-stranded sequence 5'-CCGG-3' and cleaves after C-1. The polypeptide is Type II restriction enzyme HpaII (Haemophilus parainfluenzae).